The sequence spans 1262 residues: MNANVTVDDAISNVNLLDTLAIPDDLPDIEARALPLLYRSNFDTNFEDRSAFVTGIAKYSEEATRHAQFNDMLSEGLQHAANMYTWRCCSRAVPMAKSNDQPNRTEINEMVVEVLKPEVSKLGSFMRFTLTAIQRFCEEVRRLCHSEKRRDFVSEAYLLTLGRFINMFAVLDELKNMKASIKNDFSTFRRASQFLTAMSDTQAVHDMQNLSMFLATQNKIKDDLKLQMKTIEGYEELLCDVVNICAHMYEHQLYLSPNEKHMFVKVIAFSLFLMDGDAANVAKLDQKKRLSISRLDKIFKTLEVVPLYGDMQIQPFAFVRRSSHYEPSKWPLSDKESDRCHVNIVEKVQSIRSDHESYVTQFAKINNEVAICDRPGNDSENREITSLALSGIQLLCQWSCAVVETISWKLLNPTNPKDNRECPENAEEYERATRYNYSPAEKTALIQIIAMIKGLQSMLGKTESDMSNSTRKCVYVELQAFIHHTINEPLQKAVKHKKDLLASILQSVKDSISDAGNELNRMTDVKGKKKSSAPKGDSANSSSSDIRIPRRTAAPGSTQLYMARTQLESLISDKLCGGKKILRKELDSKTIEKISVFLRKSAHWPALFRLSDSMTEAGELSQLWFREFYLEMTMGQRIQFPIEMSMPWILTDYILSCNEPSLIESALYQLDLYNDAAQYSLFNFNKQFLYDEVEAEVNLCFDQFVYKLSEMVFTHYKQLASCMLLDKRFKAEILRSGTMIRSPSAARFESLLQQRHVQLLGRSVDLNRVVSQRVNMALLKALDAAIWKFESEPLSSIVELDMLIDTNRLCHTLLSDVLHSIAPFDDLFQEANHAVNSPHGRITLHVFWELNYDFVPNFVYNGSTHRFVRARHVFRKTPAREKPPQVGQVYYWGSKSLMAAFMNICNAYSQCIGTQHLKAITRLLHYQGIAVILDELLKMTNRLLNDKIRRHVRNVFNMMPKVCKLPRSDYGSNALLQYYVHHLEAVGKYPELKSEFCQDLRELGNMIVFCQQLEVALGQEEAHDLFLAAAYTGTVPQPPARNAQEQMKQLAKLEDKYSRIHLTEIIDKISPDDGQAAIAKDAELMTKERLCCGLNAFENFLVRIKQMLAADDIWTGGYPTNGVFWIDECVEWYRVYSALQFFLCQPTRDDNEVYAEELFGDSLQWGGLTLITLLGQHRRFEVLDFCYHLHRVNKADGKDEVISGIRLAKMVERIRRFQLLNNQIFIILENQLNENNDDPNERVREFAPPVHPNYANHAARRQ.

The tract at residues 519–550 is disordered; sequence LNRMTDVKGKKKSSAPKGDSANSSSSDIRIPR.

It belongs to the CYFIP family. Interacts with gex-3.

It is found in the cytoplasm. In terms of biological role, required for initial steps of body morphogenesis. May play a role in egg laying and yolk protein clatherin-mediated endocytosis by oocytes during oogenesis. Plays a role in the formation of muscle connections, also called muscle arm extensions, between the body wall and the motor axons in the dorsal and ventral cord. The chain is Cytoplasmic FMR1-interacting protein homolog from Caenorhabditis elegans.